We begin with the raw amino-acid sequence, 359 residues long: Protein trichome birefringence-like 42 (359 aa).

A helical; Signal-anchor for type II membrane protein transmembrane segment spans residues 7 to 25 (LFLLLLIFLVDLSDYGVLA). The GDS motif signature appears at 110–112 (GDS). Residues 335-349 (DCSHWCLPGVPDAWN) carry the DCXHWCLPGXXDXWN motif motif.

Belongs to the PC-esterase family. TBL subfamily.

The protein resides in the membrane. May act as a bridging protein that binds pectin and other cell wall polysaccharides. Probably involved in maintaining esterification of pectins. May be involved in the specific O-acetylation of cell wall polymers. The protein is Protein trichome birefringence-like 42 (TBL42) of Arabidopsis thaliana (Mouse-ear cress).